The chain runs to 290 residues: MKYRKLIILVLSILIILPVSTLDGHHIANADDDSPKKLKYKENSALALNYHRVRKANFLNNFIYFFSSSKEIKNYSVSQSQFESQIKWLKSHDAKFLTLKEFLYYKKKGKFPKRSVWINFDDMDETIYENAYPILKKYKIPATGFIITGHVGEENFHNLDMISKKELKEMYKTGLWEFETHTHDLHNLSKNNKSKLMKASEATIIKDLNKSEKYLTKNFKKSQKTIAYPYGLMNDDKLPVIKKAGLKYGFSLEEKAVTPNSNDYYIPRILISDDAFEHLIKRWDGFHEKD.

An N-terminal signal peptide occupies residues 1–28 (MKYRKLIILVLSILIILPVSTLDGHHIA). Residues 114-290 (RSVWINFDDM…KRWDGFHEKD (177 aa)) enclose the NodB homology domain.

It belongs to the polysaccharide deacetylase family.

The protein localises to the secreted. Its subcellular location is the cell wall. Its function is as follows. Catalyzes the N-deacetylation of poly-beta-1,6-N-acetyl-D-glucosamine (PNAG, also referred to as PIA), a biofilm adhesin polysaccharide. N-deacetylation is crucial for attachment of the polysaccharide to the bacterial cell surface; it leads to the introduction of positive charges in the otherwise neutral PIA polymer, allowing electrostatic interactions. This Staphylococcus aureus (strain Mu50 / ATCC 700699) protein is Poly-beta-1,6-N-acetyl-D-glucosamine N-deacetylase (icaB).